Here is a 617-residue protein sequence, read N- to C-terminus: Kelch-like protein diablo (617 aa).

The disordered stretch occupies residues 1–55; sequence MGDPLLPGSTGLGSGGTAAATGGTGTTGTGLGSGGTSGTERPPSPARLTHTSEKH. The segment covering 10-37 has biased composition (gly residues); that stretch reads TGLGSGGTAAATGGTGTTGTGLGSGGTS. The BTB domain occupies 73–140; sequence CDVVLNVGGR…CYTAHIIVEE (68 aa). The BACK domain maps to 175 to 277; sequence CLGIRAFADT…SPKFLVGTVG (103 aa). Kelch repeat units lie at residues 324-370, 372-418, 419-465, 467-512, 514-559, and 560-606; these read VLFA…VLND, LYAV…VLDG, FLYA…VLSG, LYAI…VFNN, IYAV…VVNG, and QLYA…VMRA.

Its pathway is protein modification; protein ubiquitination. Its function is as follows. Probable substrate-specific adapter of an E3 ubiquitin-protein ligase complex which mediates the ubiquitination and subsequent proteasomal degradation of target proteins. May have a role in synapse differentiation and growth. The polypeptide is Kelch-like protein diablo (Drosophila mojavensis (Fruit fly)).